A 225-amino-acid polypeptide reads, in one-letter code: NAD(P)H-quinone oxidoreductase subunit K, chloroplastic (225 aa).

Residues cysteine 43, cysteine 44, cysteine 108, and cysteine 139 each coordinate [4Fe-4S] cluster.

It belongs to the complex I 20 kDa subunit family. In terms of assembly, NDH is composed of at least 16 different subunits, 5 of which are encoded in the nucleus. [4Fe-4S] cluster is required as a cofactor.

The protein localises to the plastid. It is found in the chloroplast thylakoid membrane. The catalysed reaction is a plastoquinone + NADH + (n+1) H(+)(in) = a plastoquinol + NAD(+) + n H(+)(out). It catalyses the reaction a plastoquinone + NADPH + (n+1) H(+)(in) = a plastoquinol + NADP(+) + n H(+)(out). In terms of biological role, NDH shuttles electrons from NAD(P)H:plastoquinone, via FMN and iron-sulfur (Fe-S) centers, to quinones in the photosynthetic chain and possibly in a chloroplast respiratory chain. The immediate electron acceptor for the enzyme in this species is believed to be plastoquinone. Couples the redox reaction to proton translocation, and thus conserves the redox energy in a proton gradient. The protein is NAD(P)H-quinone oxidoreductase subunit K, chloroplastic of Triticum aestivum (Wheat).